Here is a 459-residue protein sequence, read N- to C-terminus: ATP synthase subunit beta (459 aa).

Residue 148–155 (GGAGVGKT) coordinates ATP.

This sequence belongs to the ATPase alpha/beta chains family. F-type ATPases have 2 components, CF(1) - the catalytic core - and CF(0) - the membrane proton channel. CF(1) has five subunits: alpha(3), beta(3), gamma(1), delta(1), epsilon(1). CF(0) has three main subunits: a(1), b(2) and c(9-12). The alpha and beta chains form an alternating ring which encloses part of the gamma chain. CF(1) is attached to CF(0) by a central stalk formed by the gamma and epsilon chains, while a peripheral stalk is formed by the delta and b chains.

It is found in the cell inner membrane. It catalyses the reaction ATP + H2O + 4 H(+)(in) = ADP + phosphate + 5 H(+)(out). Produces ATP from ADP in the presence of a proton gradient across the membrane. The catalytic sites are hosted primarily by the beta subunits. The polypeptide is ATP synthase subunit beta (Hahella chejuensis (strain KCTC 2396)).